The chain runs to 333 residues: Outer membrane protein assembly factor BamC (333 aa).

A signal peptide spans 1–18 (MKKCLFPLSVLAVIVATG). Cys19 is lipidated: N-palmitoyl cysteine. Residue Cys19 is the site of S-diacylglycerol cysteine attachment.

This sequence belongs to the BamC family. As to quaternary structure, part of the Bam complex.

The protein localises to the cell outer membrane. In terms of biological role, part of the outer membrane protein assembly complex, which is involved in assembly and insertion of beta-barrel proteins into the outer membrane. The protein is Outer membrane protein assembly factor BamC of Actinobacillus succinogenes (strain ATCC 55618 / DSM 22257 / CCUG 43843 / 130Z).